Reading from the N-terminus, the 342-residue chain is S-adenosylmethionine:tRNA ribosyltransferase-isomerase (342 aa).

This sequence belongs to the QueA family. Monomer.

The protein localises to the cytoplasm. The catalysed reaction is 7-aminomethyl-7-carbaguanosine(34) in tRNA + S-adenosyl-L-methionine = epoxyqueuosine(34) in tRNA + adenine + L-methionine + 2 H(+). The protein operates within tRNA modification; tRNA-queuosine biosynthesis. Transfers and isomerizes the ribose moiety from AdoMet to the 7-aminomethyl group of 7-deazaguanine (preQ1-tRNA) to give epoxyqueuosine (oQ-tRNA). This is S-adenosylmethionine:tRNA ribosyltransferase-isomerase from Campylobacter jejuni subsp. jejuni serotype O:6 (strain 81116 / NCTC 11828).